A 373-amino-acid chain; its full sequence is MNREKVQVGDSVAPAGAGVIVVAPQDGMDDKRLAAGELPVFNCVGGRDALPAESRETSPRHEPVPAGAPPTVHRTTSFSVLDILDPNKFTSKRQTPNRTGCEFAFGAENRSDDSNHTIEHKSYQEDYDCKKTSGILKDGFVFRSDECESDFTRGNQSDSELQEDLCSEESSALTGNNDAEFGQHEDDDSISKSPDGQQTQQSSSNGQNHQVKPKRKRSGSDSKSGKPRRARTAFTYEQLVALENKFKSTRYLSVCERLNLALSLSLTETQVKIWFQNRRTKWKKQNPGADTSAPTSGGGGGNGPSNGLGGLSPLSPSPPMSGHLSMHTSYPGHTPGGLVCTTQLPFLPGHAVLSPFMLGSQTYGAPTFYAPHL.

3 disordered regions span residues 49–74 (ALPA…TVHR), 149–231 (SDFT…RRAR), and 281–328 (KWKK…SMHT). The segment covering 53–63 (ESRETSPRHEP) has biased composition (basic and acidic residues). A compositionally biased stretch (polar residues) spans 168-177 (EESSALTGNN). Low complexity predominate over residues 196–210 (GQQTQQSSSNGQNHQ). Residues 227-286 (PRRARTAFTYEQLVALENKFKSTRYLSVCERLNLALSLSLTETQVKIWFQNRRTKWKKQN) constitute a DNA-binding region (homeobox). Positions 296 to 310 (SGGGGGNGPSNGLGG) are enriched in gly residues.

It belongs to the NK-1 homeobox family.

The protein localises to the nucleus. Its function is as follows. May participate in the energy homeostasis regulation. The polypeptide is NK1 transcription factor-related protein 1 (Danio rerio (Zebrafish)).